The primary structure comprises 552 residues: L-ascorbate oxidase (552 aa).

2 Plastocyanin-like domains span residues 1-122 (SQIR…LIVD) and 134-300 (DGEI…NYLP). 3 cysteine pairs are disulfide-bonded: Cys-19-Cys-201, Cys-81-Cys-538, and Cys-180-Cys-193. His-60 and His-62 together coordinate Cu cation. An N-linked (GlcNAc...) asparagine glycan is attached at Asn-92. The Cu cation site is built by His-104 and His-106. N-linked (GlcNAc...) asparagine glycosylation is found at Asn-325 and Asn-440. The Plastocyanin-like 3 domain maps to 344 to 523 (NRRIFLLNTQ…HMGMGVVFAE (180 aa)). Cu cation-binding residues include His-445, His-448, His-450, His-506, Cys-507, His-508, His-512, and Met-517.

This sequence belongs to the multicopper oxidase family. In terms of assembly, dimer. It depends on Cu cation as a cofactor.

It localises to the secreted. The enzyme catalyses 4 L-ascorbate + O2 = 4 monodehydro-L-ascorbate radical + 2 H2O. Its function is as follows. May be involved in a redox system involving ascorbic acid. The protein is L-ascorbate oxidase of Cucurbita pepo var. melopepo (Zucchini).